The chain runs to 412 residues: 1-deoxy-D-xylulose 5-phosphate reductoisomerase (412 aa).

NADPH contacts are provided by Thr5, Gly6, Ser7, Ile8, Gly31, Asn33, and Asn125. Position 126 (Lys126) interacts with 1-deoxy-D-xylulose 5-phosphate. NADPH is bound at residue Glu127. Asp151 serves as a coordination point for Mn(2+). 1-deoxy-D-xylulose 5-phosphate contacts are provided by Ser152, Glu153, Ser189, and His212. Residue Glu153 participates in Mn(2+) binding. NADPH is bound at residue Gly218. 1-deoxy-D-xylulose 5-phosphate contacts are provided by Ser225, Asn230, Lys231, and Glu234. Glu234 serves as a coordination point for Mn(2+).

This sequence belongs to the DXR family. Requires Mg(2+) as cofactor. It depends on Mn(2+) as a cofactor.

The catalysed reaction is 2-C-methyl-D-erythritol 4-phosphate + NADP(+) = 1-deoxy-D-xylulose 5-phosphate + NADPH + H(+). It participates in isoprenoid biosynthesis; isopentenyl diphosphate biosynthesis via DXP pathway; isopentenyl diphosphate from 1-deoxy-D-xylulose 5-phosphate: step 1/6. In terms of biological role, catalyzes the NADPH-dependent rearrangement and reduction of 1-deoxy-D-xylulose-5-phosphate (DXP) to 2-C-methyl-D-erythritol 4-phosphate (MEP). This Prochlorococcus marinus (strain MIT 9313) protein is 1-deoxy-D-xylulose 5-phosphate reductoisomerase.